Here is a 394-residue protein sequence, read N- to C-terminus: Envelope glycoprotein D (394 aa).

The first 25 residues, Met-1–Gly-25, serve as a signal peptide directing secretion. An interaction with TNFRSF14 region spans residues Lys-26–Pro-57. Over Lys-26–Met-340 the chain is Virion surface. Zn(2+) is bound at residue His-64. Intrachain disulfides connect Cys-91–Cys-214, Cys-131–Cys-227, and Cys-143–Cys-152. Asn-119 and Asn-146 each carry an N-linked (GlcNAc...) asparagine; by host glycan. Zn(2+) is bound at residue Asp-240. A profusion region spans residues Leu-261–Glu-305. The tract at residues Ser-275–Ser-301 is disordered. Asn-287 carries an N-linked (GlcNAc...) asparagine; by host glycan. A helical membrane pass occupies residues Gly-341–Val-361. At Tyr-362–Tyr-394 the chain is on the intravirion side.

The protein belongs to the herpesviridae glycoprotein D family. Homodimer. Interacts with host receptor TNFRSF14. Interacts with host receptor NECTIN1. Mutant Rid1 interacts with host receptor NECTIN2. Interacts (via profusion domain) with gB; this interaction occurs in the absence of gH/gL. Interacts (via profusion domain) with gH/gL heterodimer; this interaction occurs in the absence of gB. Associates with the gB-gH/gL-gD complex. Interacts (via C-terminus) with UL11 tegument protein. Interacts (via C-terminus) with VP22 tegument protein; this interaction might be very weak. Interacts with host RSAD2.

The protein localises to the virion membrane. Its subcellular location is the host Golgi apparatus. Its function is as follows. Envelope glycoprotein that binds to the host cell entry receptors NECTIN1, TNFRSF14/HVEM and 3-O-sulfated heparan sulfate, promoting the virus entry into host cells. May trigger fusion with host membrane, by recruiting the fusion machinery composed of gB and gH/gL. The chain is Envelope glycoprotein D (gD) from Human herpesvirus 1 (strain KOS) (HHV-1).